The chain runs to 153 residues: Ribosome maturation factor RimP (153 aa).

This sequence belongs to the RimP family.

Its subcellular location is the cytoplasm. Its function is as follows. Required for maturation of 30S ribosomal subunits. The chain is Ribosome maturation factor RimP from Solibacter usitatus (strain Ellin6076).